We begin with the raw amino-acid sequence, 1053 residues long: Protein CLEC16A (1053 aa).

In terms of domain architecture, FPL spans 51 to 198 (IRSITEILIW…AVRTITLNVY (148 aa)). 3 disordered regions span residues 375–434 (SLEM…GESE), 452–471 (STSV…AATC), and 892–983 (SSPS…SPSL). Positions 381 to 392 (HKGKRRVQKRPN) are enriched in basic residues. Residues 892 to 938 (SSPSLSSQSPPSASGSPSGSGSTSHCDSGGTSSSSTPSTAQSPADAP) are compositionally biased toward low complexity.

It belongs to the CLEC16A/gop-1 family. Interacts with RNF41/NRDP1. As to expression, almost exclusively expressed in immune cells, including dendritic cells, B-lymphocytes and natural killer cells.

The protein resides in the endosome membrane. Its subcellular location is the lysosome membrane. Regulator of mitophagy through the upstream regulation of the RNF41/NRDP1-PRKN pathway. Mitophagy is a selective form of autophagy necessary for mitochondrial quality control. The RNF41/NRDP1-PRKN pathway regulates autophagosome-lysosome fusion during late mitophagy. May protect RNF41/NRDP1 from proteasomal degradation, RNF41/NRDP1 which regulates proteasomal degradation of PRKN. Plays a key role in beta cells functions by regulating mitophagy/autophagy and mitochondrial health. The protein is Protein CLEC16A of Homo sapiens (Human).